Here is a 344-residue protein sequence, read N- to C-terminus: Holliday junction branch migration complex subunit RuvB (344 aa).

The tract at residues 4–184 (QDRIIDANAK…FGIVQRLEFY (181 aa)) is large ATPase domain (RuvB-L). ATP-binding positions include Arg24, Gly65, Lys68, Thr69, Thr70, 131–133 (EDF), Arg174, Tyr184, and Arg221. Thr69 serves as a coordination point for Mg(2+). The small ATPAse domain (RuvB-S) stretch occupies residues 185–255 (NIEDLTHIVE…IADLALNMLN (71 aa)). Positions 258 to 344 (EHGFDHMDRR…ALKQDSLPGI (87 aa)) are head domain (RuvB-H). Positions 294, 313, and 318 each coordinate DNA.

This sequence belongs to the RuvB family. In terms of assembly, homohexamer. Forms an RuvA(8)-RuvB(12)-Holliday junction (HJ) complex. HJ DNA is sandwiched between 2 RuvA tetramers; dsDNA enters through RuvA and exits via RuvB. An RuvB hexamer assembles on each DNA strand where it exits the tetramer. Each RuvB hexamer is contacted by two RuvA subunits (via domain III) on 2 adjacent RuvB subunits; this complex drives branch migration. In the full resolvosome a probable DNA-RuvA(4)-RuvB(12)-RuvC(2) complex forms which resolves the HJ.

The protein localises to the cytoplasm. The catalysed reaction is ATP + H2O = ADP + phosphate + H(+). In terms of biological role, the RuvA-RuvB-RuvC complex processes Holliday junction (HJ) DNA during genetic recombination and DNA repair, while the RuvA-RuvB complex plays an important role in the rescue of blocked DNA replication forks via replication fork reversal (RFR). RuvA specifically binds to HJ cruciform DNA, conferring on it an open structure. The RuvB hexamer acts as an ATP-dependent pump, pulling dsDNA into and through the RuvAB complex. RuvB forms 2 homohexamers on either side of HJ DNA bound by 1 or 2 RuvA tetramers; 4 subunits per hexamer contact DNA at a time. Coordinated motions by a converter formed by DNA-disengaged RuvB subunits stimulates ATP hydrolysis and nucleotide exchange. Immobilization of the converter enables RuvB to convert the ATP-contained energy into a lever motion, pulling 2 nucleotides of DNA out of the RuvA tetramer per ATP hydrolyzed, thus driving DNA branch migration. The RuvB motors rotate together with the DNA substrate, which together with the progressing nucleotide cycle form the mechanistic basis for DNA recombination by continuous HJ branch migration. Branch migration allows RuvC to scan DNA until it finds its consensus sequence, where it cleaves and resolves cruciform DNA. This Saccharophagus degradans (strain 2-40 / ATCC 43961 / DSM 17024) protein is Holliday junction branch migration complex subunit RuvB.